Consider the following 344-residue polypeptide: Dihydroorotase (344 aa).

The Zn(2+) site is built by His-14 and His-16. Substrate contacts are provided by residues 16–18 (HLR) and Asn-42. Zn(2+)-binding residues include Lys-100, His-137, and His-175. Residue Lys-100 is modified to N6-carboxylysine. Residue His-137 participates in substrate binding. Residue Leu-220 coordinates substrate. Zn(2+) is bound at residue Asp-248. The active site involves Asp-248. Residues His-252 and Ala-264 each contribute to the substrate site.

This sequence belongs to the metallo-dependent hydrolases superfamily. DHOase family. Class II DHOase subfamily. As to quaternary structure, homodimer. Requires Zn(2+) as cofactor.

It catalyses the reaction (S)-dihydroorotate + H2O = N-carbamoyl-L-aspartate + H(+). The protein operates within pyrimidine metabolism; UMP biosynthesis via de novo pathway; (S)-dihydroorotate from bicarbonate: step 3/3. In terms of biological role, catalyzes the reversible cyclization of carbamoyl aspartate to dihydroorotate. In Cupriavidus pinatubonensis (strain JMP 134 / LMG 1197) (Cupriavidus necator (strain JMP 134)), this protein is Dihydroorotase.